The following is a 111-amino-acid chain: Cytochrome c (111 aa).

Ala-1 carries the N-acetylalanine modification. Cys-22, Cys-25, and His-26 together coordinate heme c. Lys-80 carries the N6,N6,N6-trimethyllysine modification. Met-88 provides a ligand contact to heme c. The residue at position 94 (Lys-94) is an N6,N6,N6-trimethyllysine.

It belongs to the cytochrome c family. Post-translationally, binds 1 heme c group covalently per subunit.

The protein localises to the mitochondrion intermembrane space. Functionally, electron carrier protein. The oxidized form of the cytochrome c heme group can accept an electron from the heme group of the cytochrome c1 subunit of cytochrome reductase. Cytochrome c then transfers this electron to the cytochrome oxidase complex, the final protein carrier in the mitochondrial electron-transport chain. The sequence is that of Cytochrome c from Guizotia abyssinica (Niger).